The chain runs to 142 residues: Transcription antitermination protein NusB (142 aa).

Belongs to the NusB family.

Functionally, involved in transcription antitermination. Required for transcription of ribosomal RNA (rRNA) genes. Binds specifically to the boxA antiterminator sequence of the ribosomal RNA (rrn) operons. In Thermotoga petrophila (strain ATCC BAA-488 / DSM 13995 / JCM 10881 / RKU-1), this protein is Transcription antitermination protein NusB.